Here is a 259-residue protein sequence, read N- to C-terminus: tRNA-cytidine(32) 2-sulfurtransferase (259 aa).

The PP-loop motif motif lies at 37–42 (SGGKDS). C112, C115, and C202 together coordinate [4Fe-4S] cluster.

The protein belongs to the TtcA family. As to quaternary structure, homodimer. Requires Mg(2+) as cofactor. It depends on [4Fe-4S] cluster as a cofactor.

It is found in the cytoplasm. The catalysed reaction is cytidine(32) in tRNA + S-sulfanyl-L-cysteinyl-[cysteine desulfurase] + AH2 + ATP = 2-thiocytidine(32) in tRNA + L-cysteinyl-[cysteine desulfurase] + A + AMP + diphosphate + H(+). It functions in the pathway tRNA modification. In terms of biological role, catalyzes the ATP-dependent 2-thiolation of cytidine in position 32 of tRNA, to form 2-thiocytidine (s(2)C32). The sulfur atoms are provided by the cysteine/cysteine desulfurase (IscS) system. The protein is tRNA-cytidine(32) 2-sulfurtransferase of Syntrophotalea carbinolica (strain DSM 2380 / NBRC 103641 / GraBd1) (Pelobacter carbinolicus).